Reading from the N-terminus, the 393-residue chain is S-adenosylmethionine synthase 2 (393 aa).

A Mg(2+)-binding site is contributed by Glu-9. Residue His-15 coordinates ATP. Glu-43 provides a ligand contact to K(+). Positions 56 and 99 each coordinate L-methionine. ATP-binding positions include 167-169 (DGK), 235-238 (SGRF), Asp-246, 252-253 (RK), Ala-269, Lys-273, and Lys-277. Asp-246 is a binding site for L-methionine. L-methionine is bound at residue Lys-277.

The protein belongs to the AdoMet synthase family. In terms of assembly, homotetramer. It depends on Mn(2+) as a cofactor. The cofactor is Mg(2+). Co(2+) is required as a cofactor. K(+) serves as cofactor. Mostly expressed in roots. Also present in stems and leaves.

The protein localises to the cytoplasm. It catalyses the reaction L-methionine + ATP + H2O = S-adenosyl-L-methionine + phosphate + diphosphate. The protein operates within amino-acid biosynthesis; S-adenosyl-L-methionine biosynthesis; S-adenosyl-L-methionine from L-methionine: step 1/1. In terms of biological role, catalyzes the formation of S-adenosylmethionine from methionine and ATP. The reaction comprises two steps that are both catalyzed by the same enzyme: formation of S-adenosylmethionine (AdoMet) and triphosphate, and subsequent hydrolysis of the triphosphate. This is S-adenosylmethionine synthase 2 (SAM2) from Solanum lycopersicum (Tomato).